Reading from the N-terminus, the 280-residue chain is Ribosomal protein L11 methyltransferase (280 aa).

S-adenosyl-L-methionine contacts are provided by Thr131, Gly152, Asp174, and Asn217.

The protein belongs to the methyltransferase superfamily. PrmA family.

The protein localises to the cytoplasm. The catalysed reaction is L-lysyl-[protein] + 3 S-adenosyl-L-methionine = N(6),N(6),N(6)-trimethyl-L-lysyl-[protein] + 3 S-adenosyl-L-homocysteine + 3 H(+). In terms of biological role, methylates ribosomal protein L11. In Bacteroides fragilis (strain ATCC 25285 / DSM 2151 / CCUG 4856 / JCM 11019 / LMG 10263 / NCTC 9343 / Onslow / VPI 2553 / EN-2), this protein is Ribosomal protein L11 methyltransferase.